Reading from the N-terminus, the 156-residue chain is Small ribosomal subunit protein uS7 (156 aa).

This sequence belongs to the universal ribosomal protein uS7 family. As to quaternary structure, part of the 30S ribosomal subunit. Contacts proteins S9 and S11.

Its function is as follows. One of the primary rRNA binding proteins, it binds directly to 16S rRNA where it nucleates assembly of the head domain of the 30S subunit. Is located at the subunit interface close to the decoding center, probably blocks exit of the E-site tRNA. This chain is Small ribosomal subunit protein uS7, found in Rubrobacter xylanophilus (strain DSM 9941 / JCM 11954 / NBRC 16129 / PRD-1).